Here is a 339-residue protein sequence, read N- to C-terminus: Glycerol-3-phosphate dehydrogenase [NAD(P)+] (339 aa).

Positions 15, 16, 36, and 110 each coordinate NADPH. Residues Lys-110, Gly-139, and Thr-141 each coordinate sn-glycerol 3-phosphate. Residue Ala-143 coordinates NADPH. Lys-195, Asp-248, Ser-258, Arg-259, and Asn-260 together coordinate sn-glycerol 3-phosphate. The active-site Proton acceptor is Lys-195. Residue Arg-259 coordinates NADPH. Residues Val-283 and Glu-285 each contribute to the NADPH site.

Belongs to the NAD-dependent glycerol-3-phosphate dehydrogenase family.

The protein localises to the cytoplasm. The enzyme catalyses sn-glycerol 3-phosphate + NAD(+) = dihydroxyacetone phosphate + NADH + H(+). The catalysed reaction is sn-glycerol 3-phosphate + NADP(+) = dihydroxyacetone phosphate + NADPH + H(+). Its pathway is membrane lipid metabolism; glycerophospholipid metabolism. Catalyzes the reduction of the glycolytic intermediate dihydroxyacetone phosphate (DHAP) to sn-glycerol 3-phosphate (G3P), the key precursor for phospholipid synthesis. The protein is Glycerol-3-phosphate dehydrogenase [NAD(P)+] of Klebsiella pneumoniae (strain 342).